The following is a 396-amino-acid chain: ATP-dependent RNA helicase eIF4A (396 aa).

Residues 1–20 form a disordered region; that stretch reads MADKGLEDVPEGQIESNYDE. Positions 23 to 51 match the Q motif motif; sequence DSFDAMNLKAELLRGVYAYGFERPSAIQQ. Residues 54–224 enclose the Helicase ATP-binding domain; it reads IMPVIKGHDV…TKFMRDPVRI (171 aa). Residue 67-74 participates in ATP binding; sequence AQSGTGKT. Residues 172–175 carry the DEAD box motif; it reads DEAD. In terms of domain architecture, Helicase C-terminal spans 235–396; it reads GIKQFYIAVE…EMPMNVADLI (162 aa).

It belongs to the DEAD box helicase family. eIF4A subfamily. As to quaternary structure, component of the eIF4F complex, which composition varies with external and internal environmental conditions. It is composed of at least eIF4A, eIF4E and eIF4G.

It localises to the cytoplasm. It carries out the reaction ATP + H2O = ADP + phosphate + H(+). In terms of biological role, ATP-dependent RNA helicase which is a subunit of the eIF4F complex involved in cap recognition and is required for mRNA binding to ribosome. In the current model of translation initiation, eIF4A unwinds RNA secondary structures in the 5'-UTR of mRNAs which is necessary to allow efficient binding of the small ribosomal subunit, and subsequent scanning for the initiator codon. This is ATP-dependent RNA helicase eIF4A (TIF1) from Phaeosphaeria nodorum (strain SN15 / ATCC MYA-4574 / FGSC 10173) (Glume blotch fungus).